The primary structure comprises 276 residues: MEPLILTAAITGAETTRADQPNLPITPEEQAKEAKACFEAGARVIHLHIREDDGRPSQRLDRFQEAISAIREVVPEIIIQISTGGAVGESFDKRLAPLALKPEMATLNAGTLNFGDDIFINHPADIIRLAEAFKQYNVVPEVEVYESGMVDAVARLIKKGIITQNPLHIQFVLGVPGGMSGKPKNLMYMMEHLKEEIPTATWAVAGIGRWHIPTSLIAMVTGGHIRCGFEDNIFYHKGVIAESNAQLVARLARIAKEIGRPLATPEQAREILALNK.

Glu14 is a (5S)-5-amino-3-oxohexanoate binding site. The Zn(2+) site is built by His46 and His48. 4 residues coordinate (5S)-5-amino-3-oxohexanoate: Ser82, Gly85, Thr106, and Asn108. Position 230 (Glu230) interacts with Zn(2+).

The protein belongs to the BKACE family. Kce subfamily. In terms of assembly, homotetramer. Zn(2+) serves as cofactor.

The enzyme catalyses (5S)-5-amino-3-oxohexanoate + acetyl-CoA = (3S)-3-aminobutanoyl-CoA + acetoacetate. The protein operates within amino-acid degradation; L-lysine degradation via acetate pathway. Its function is as follows. Involved in the anaerobic fermentation of lysine. Catalyzes the reversible reaction between 3-keto-5-aminohexanoate (KAH) and acetyl-CoA to form 3-aminobutyryl-CoA and acetoacetate. The reaction involves the deprotonation of KAH, the nucleophilic addition onto acetyl-CoA and the intramolecular transfer of the CoA moiety. In Cloacimonas acidaminovorans (strain Evry), this protein is 3-keto-5-aminohexanoate cleavage enzyme.